The following is a 155-amino-acid chain: Aspartate carbamoyltransferase regulatory chain (155 aa).

Positions 110, 115, 139, and 142 each coordinate Zn(2+).

The protein belongs to the PyrI family. As to quaternary structure, contains catalytic and regulatory chains. Zn(2+) serves as cofactor.

Functionally, involved in allosteric regulation of aspartate carbamoyltransferase. This Yersinia pseudotuberculosis serotype IB (strain PB1/+) protein is Aspartate carbamoyltransferase regulatory chain.